Reading from the N-terminus, the 181-residue chain is Oligoribonuclease (181 aa).

The Exonuclease domain occupies 8–171; it reads LIWIDLEMTG…QDIQESIAEL (164 aa). Residue Y129 is part of the active site.

This sequence belongs to the oligoribonuclease family.

It localises to the cytoplasm. Its function is as follows. 3'-to-5' exoribonuclease specific for small oligoribonucleotides. The sequence is that of Oligoribonuclease from Shewanella putrefaciens (strain CN-32 / ATCC BAA-453).